Here is a 367-residue protein sequence, read N- to C-terminus: Putative methylthioribose-1-phosphate isomerase (367 aa).

Substrate is bound by residues 65–67 (RGA), Arg106, and Gln218. Asp259 acts as the Proton donor in catalysis. 269-270 (NK) provides a ligand contact to substrate.

Belongs to the eIF-2B alpha/beta/delta subunits family. MtnA subfamily.

It carries out the reaction 5-(methylsulfanyl)-alpha-D-ribose 1-phosphate = 5-(methylsulfanyl)-D-ribulose 1-phosphate. Its function is as follows. Catalyzes the interconversion of methylthioribose-1-phosphate (MTR-1-P) into methylthioribulose-1-phosphate (MTRu-1-P). The polypeptide is Putative methylthioribose-1-phosphate isomerase (Sulfolobus acidocaldarius (strain ATCC 33909 / DSM 639 / JCM 8929 / NBRC 15157 / NCIMB 11770)).